The primary structure comprises 404 residues: Inosine-5'-monophosphate dehydrogenase (404 aa).

Residues Asp172 and 222 to 224 each bind NAD(+); that span reads GIG. K(+) contacts are provided by Gly224 and Gly226. Ser227 contributes to the IMP binding site. Cys229 serves as a coordination point for K(+). Catalysis depends on Cys229, which acts as the Thioimidate intermediate. IMP-binding positions include 262 to 264, 285 to 286, and 309 to 313; these read DGG, GN, and YVGMG. Residue Arg325 is the Proton acceptor of the active site. Glu340 provides a ligand contact to IMP. Residues Glu394, Ser395, and His396 each contribute to the K(+) site.

Belongs to the IMPDH/GMPR family. As to quaternary structure, homotetramer. The cofactor is K(+).

It carries out the reaction IMP + NAD(+) + H2O = XMP + NADH + H(+). Its pathway is purine metabolism; XMP biosynthesis via de novo pathway; XMP from IMP: step 1/1. Mycophenolic acid (MPA) is a non-competitive inhibitor that prevents formation of the closed enzyme conformation by binding to the same site as the amobile flap. In contrast, mizoribine monophosphate (MZP) is a competitive inhibitor that induces the closed conformation. MPA is a potent inhibitor of mammalian IMPDHs but a poor inhibitor of the bacterial enzymes. MZP is a more potent inhibitor of bacterial IMPDH. Its function is as follows. Catalyzes the conversion of inosine 5'-phosphate (IMP) to xanthosine 5'-phosphate (XMP), the first committed and rate-limiting step in the de novo synthesis of guanine nucleotides, and therefore plays an important role in the regulation of cell growth. Essential for mouse infection by tick bite and critical for the survival in environments that appear to lack sufficient amounts of guanine, guanosine, and/or deoxyguanosine to support spirochete growth, such as mammalian host tissues. In Borreliella burgdorferi (strain ATCC 35210 / DSM 4680 / CIP 102532 / B31) (Borrelia burgdorferi), this protein is Inosine-5'-monophosphate dehydrogenase.